A 526-amino-acid polypeptide reads, in one-letter code: Amino acid transporter AVT1E (526 aa).

Residues 1–49 (MKQNETFDQEREDLYHTFDEEDEESQTESSVPSTPLSRNRSEDVPVPWP) form a disordered region. The span at 8–18 (DQEREDLYHTF) shows a compositional bias: basic and acidic residues. A run of 11 helical transmembrane segments spans residues 140-160 (SVLN…PYAV), 165-185 (WLGL…GILL), 212-232 (ILVS…YIIM), 253-273 (LDST…TVWL), 278-298 (LLSY…LCLF), 320-340 (IPVA…FPNI), 353-373 (VLLI…VCGF), 397-417 (IAVW…ITPV), 436-456 (GVSM…ALTV), 458-478 (FFAT…ALIF), and 494-514 (FQIG…CCGT).

Belongs to the amino acid/polyamine transporter 2 family. Amino acid/auxin permease (AAAP) (TC 2.A.18.5) subfamily.

It localises to the membrane. The sequence is that of Amino acid transporter AVT1E from Arabidopsis thaliana (Mouse-ear cress).